Consider the following 488-residue polypeptide: UDP-N-acetylmuramate--L-alanine ligase (488 aa).

127–133 (GTHGKTT) contributes to the ATP binding site.

Belongs to the MurCDEF family.

The protein localises to the cytoplasm. The enzyme catalyses UDP-N-acetyl-alpha-D-muramate + L-alanine + ATP = UDP-N-acetyl-alpha-D-muramoyl-L-alanine + ADP + phosphate + H(+). Its pathway is cell wall biogenesis; peptidoglycan biosynthesis. Functionally, cell wall formation. This is UDP-N-acetylmuramate--L-alanine ligase from Shewanella putrefaciens (strain CN-32 / ATCC BAA-453).